A 157-amino-acid polypeptide reads, in one-letter code: SsrA-binding protein (157 aa).

Positions 133–157 (LHDKRETAKERDWQRDKARLMRDKG) are disordered. A compositionally biased stretch (basic and acidic residues) spans 135–157 (DKRETAKERDWQRDKARLMRDKG).

The protein belongs to the SmpB family.

It localises to the cytoplasm. In terms of biological role, required for rescue of stalled ribosomes mediated by trans-translation. Binds to transfer-messenger RNA (tmRNA), required for stable association of tmRNA with ribosomes. tmRNA and SmpB together mimic tRNA shape, replacing the anticodon stem-loop with SmpB. tmRNA is encoded by the ssrA gene; the 2 termini fold to resemble tRNA(Ala) and it encodes a 'tag peptide', a short internal open reading frame. During trans-translation Ala-aminoacylated tmRNA acts like a tRNA, entering the A-site of stalled ribosomes, displacing the stalled mRNA. The ribosome then switches to translate the ORF on the tmRNA; the nascent peptide is terminated with the 'tag peptide' encoded by the tmRNA and targeted for degradation. The ribosome is freed to recommence translation, which seems to be the essential function of trans-translation. This is SsrA-binding protein from Methylobacterium sp. (strain 4-46).